A 127-amino-acid chain; its full sequence is Small ribosomal subunit protein eS8 (127 aa).

Positions 1 to 33 (MAIWQGKSMKKPSGGRAKMNRGKRKYELGREPA) are disordered.

It belongs to the eukaryotic ribosomal protein eS8 family. In terms of assembly, part of the 30S ribosomal subunit.

This is Small ribosomal subunit protein eS8 (rps8e) from Methanothermobacter thermautotrophicus (strain ATCC 29096 / DSM 1053 / JCM 10044 / NBRC 100330 / Delta H) (Methanobacterium thermoautotrophicum).